A 289-amino-acid polypeptide reads, in one-letter code: Polyamine aminopropyltransferase (289 aa).

Residues T5 to D238 form the PABS domain. S-methyl-5'-thioadenosine is bound at residue Q33. H64 and D88 together coordinate spermidine. S-methyl-5'-thioadenosine is bound by residues E108 and D140 to G141. The active-site Proton acceptor is D158. D158 to D161 is a binding site for spermidine. P165 is an S-methyl-5'-thioadenosine binding site.

The protein belongs to the spermidine/spermine synthase family. In terms of assembly, homodimer or homotetramer.

The protein localises to the cytoplasm. The enzyme catalyses S-adenosyl 3-(methylsulfanyl)propylamine + putrescine = S-methyl-5'-thioadenosine + spermidine + H(+). The protein operates within amine and polyamine biosynthesis; spermidine biosynthesis; spermidine from putrescine: step 1/1. Its function is as follows. Catalyzes the irreversible transfer of a propylamine group from the amino donor S-adenosylmethioninamine (decarboxy-AdoMet) to putrescine (1,4-diaminobutane) to yield spermidine. This is Polyamine aminopropyltransferase from Enterobacter sp. (strain 638).